The following is a 963-amino-acid chain: Pyruvate, phosphate dikinase 1, chloroplastic (963 aa).

Residues 1–76 (MLYIRKKMTS…GLHRETKARA (76 aa)) constitute a chloroplast transit peptide. Position 543 is a phosphothreonine; by PDRP1 (Thr543). His545 (tele-phosphohistidine intermediate) is an active-site residue. Substrate is bound by residues Arg651, Arg707, Glu836, Gly857, Thr858, Asn859, and Asp860. Glu836 provides a ligand contact to Mg(2+). Residue Asp860 coordinates Mg(2+). Cys922 acts as the Proton donor in catalysis.

It belongs to the PEP-utilizing enzyme family. In terms of assembly, homotetramer. Interacts with RP1 and RP2. Mg(2+) is required as a cofactor. In terms of processing, phosphorylation of Thr-543 in the dark inactivates the enzyme. Dephosphorylation upon light stimulation reactivates the enzyme. In terms of tissue distribution, isoform 1 is expressed in leaves, flowers and siliques. Isoform 2 is found in cotyledons, rosette and cauline leaves, petioles, flowers and siliques.

Its subcellular location is the plastid. It localises to the chloroplast. The protein resides in the cytoplasm. The enzyme catalyses pyruvate + phosphate + ATP = phosphoenolpyruvate + AMP + diphosphate + H(+). Its activity is regulated as follows. Activated by light-induced dephosphorylation. Inhibited by dark-induced phosphorylation. Both reactions are catalyzed by PDRP1. Functionally, formation of phosphoenolpyruvate. May be involved in regulating the flux of carbon into starch and fatty acids of seeds and in the remobilization of nitrogen reserves in senescing leaves. This Arabidopsis thaliana (Mouse-ear cress) protein is Pyruvate, phosphate dikinase 1, chloroplastic (PPDK).